Here is a 174-residue protein sequence, read N- to C-terminus: Co-chaperone protein HscB homolog (174 aa).

Residues 2 to 74 (NYFNLFNFTP…LRRAEHLLSL (73 aa)) enclose the J domain.

It belongs to the HscB family. As to quaternary structure, interacts with HscA and stimulates its ATPase activity.

In terms of biological role, co-chaperone involved in the maturation of iron-sulfur cluster-containing proteins. Seems to help targeting proteins to be folded toward HscA. The protein is Co-chaperone protein HscB homolog of Shewanella denitrificans (strain OS217 / ATCC BAA-1090 / DSM 15013).